The primary structure comprises 336 residues: Holliday junction branch migration complex subunit RuvB (336 aa).

The tract at residues 4–184 (ADRLIQPQVI…FGIPLRLEFY (181 aa)) is large ATPase domain (RuvB-L). ATP contacts are provided by residues R24, G65, K68, T69, T70, 131–133 (EDY), R174, Y184, and R221. T69 contributes to the Mg(2+) binding site. A small ATPAse domain (RuvB-S) region spans residues 185 to 255 (NIKDLSTIVI…VAELALDMLD (71 aa)). A head domain (RuvB-H) region spans residues 258 to 336 (AEGFDYMDRK…HFNLIQPEAK (79 aa)). The DNA site is built by R294, R313, and R318.

The protein belongs to the RuvB family. As to quaternary structure, homohexamer. Forms an RuvA(8)-RuvB(12)-Holliday junction (HJ) complex. HJ DNA is sandwiched between 2 RuvA tetramers; dsDNA enters through RuvA and exits via RuvB. An RuvB hexamer assembles on each DNA strand where it exits the tetramer. Each RuvB hexamer is contacted by two RuvA subunits (via domain III) on 2 adjacent RuvB subunits; this complex drives branch migration. In the full resolvosome a probable DNA-RuvA(4)-RuvB(12)-RuvC(2) complex forms which resolves the HJ.

The protein localises to the cytoplasm. The enzyme catalyses ATP + H2O = ADP + phosphate + H(+). Its function is as follows. The RuvA-RuvB-RuvC complex processes Holliday junction (HJ) DNA during genetic recombination and DNA repair, while the RuvA-RuvB complex plays an important role in the rescue of blocked DNA replication forks via replication fork reversal (RFR). RuvA specifically binds to HJ cruciform DNA, conferring on it an open structure. The RuvB hexamer acts as an ATP-dependent pump, pulling dsDNA into and through the RuvAB complex. RuvB forms 2 homohexamers on either side of HJ DNA bound by 1 or 2 RuvA tetramers; 4 subunits per hexamer contact DNA at a time. Coordinated motions by a converter formed by DNA-disengaged RuvB subunits stimulates ATP hydrolysis and nucleotide exchange. Immobilization of the converter enables RuvB to convert the ATP-contained energy into a lever motion, pulling 2 nucleotides of DNA out of the RuvA tetramer per ATP hydrolyzed, thus driving DNA branch migration. The RuvB motors rotate together with the DNA substrate, which together with the progressing nucleotide cycle form the mechanistic basis for DNA recombination by continuous HJ branch migration. Branch migration allows RuvC to scan DNA until it finds its consensus sequence, where it cleaves and resolves cruciform DNA. In Shewanella piezotolerans (strain WP3 / JCM 13877), this protein is Holliday junction branch migration complex subunit RuvB.